A 354-amino-acid chain; its full sequence is NADH-ubiquinone oxidoreductase chain 1 (354 aa).

8 helical membrane passes run 43-63 (LFWS…LTLF), 108-128 (PALF…LWGC), 139-159 (FFWG…GVVL), 180-200 (VISY…VVGS), 211-231 (VSGC…FCVL), 264-284 (IFIA…VLFL), 298-318 (LISS…LIVL), and 334-354 (LIWC…LMII).

The protein belongs to the complex I subunit 1 family.

The protein localises to the mitochondrion inner membrane. It catalyses the reaction a ubiquinone + NADH + 5 H(+)(in) = a ubiquinol + NAD(+) + 4 H(+)(out). Functionally, core subunit of the mitochondrial membrane respiratory chain NADH dehydrogenase (Complex I) that is believed to belong to the minimal assembly required for catalysis. Complex I functions in the transfer of electrons from NADH to the respiratory chain. The immediate electron acceptor for the enzyme is believed to be ubiquinone. This chain is NADH-ubiquinone oxidoreductase chain 1 (ND1), found in Pecten maximus (King scallop).